Here is a 350-residue protein sequence, read N- to C-terminus: S-adenosylmethionine:tRNA ribosyltransferase-isomerase (350 aa).

Belongs to the QueA family. As to quaternary structure, monomer.

It localises to the cytoplasm. The catalysed reaction is 7-aminomethyl-7-carbaguanosine(34) in tRNA + S-adenosyl-L-methionine = epoxyqueuosine(34) in tRNA + adenine + L-methionine + 2 H(+). It participates in tRNA modification; tRNA-queuosine biosynthesis. Functionally, transfers and isomerizes the ribose moiety from AdoMet to the 7-aminomethyl group of 7-deazaguanine (preQ1-tRNA) to give epoxyqueuosine (oQ-tRNA). The chain is S-adenosylmethionine:tRNA ribosyltransferase-isomerase from Parvibaculum lavamentivorans (strain DS-1 / DSM 13023 / NCIMB 13966).